The sequence spans 66 residues: Beta-toxin Cbo1 (66 aa).

The region spanning 1-66 is the LCN-type CS-alpha/beta domain; sequence KEGYLVNHST…VWPLPKKTCN (66 aa). 4 disulfides stabilise this stretch: cysteine 12–cysteine 65, cysteine 16–cysteine 41, cysteine 25–cysteine 46, and cysteine 29–cysteine 48. Asparagine amide is present on asparagine 66.

Belongs to the long (4 C-C) scorpion toxin superfamily. Sodium channel inhibitor family. Beta subfamily. In terms of tissue distribution, expressed by the venom gland.

The protein resides in the secreted. In terms of biological role, beta toxins bind voltage-independently at site-4 of sodium channels and shift the voltage of activation toward more negative potentials thereby affecting sodium channel activation and promoting spontaneous and repetitive firing. Is active on the human voltage-gated sodium channel Nav1.6/SCN8A when tested at 200 nM. In vivo, is toxic to mice when intraperitoneally injected. The protein is Beta-toxin Cbo1 of Centruroides bonito (Scorpion).